The primary structure comprises 132 residues: Small ribosomal subunit protein uS8 (132 aa).

Belongs to the universal ribosomal protein uS8 family. Part of the 30S ribosomal subunit. Contacts proteins S5 and S12.

Functionally, one of the primary rRNA binding proteins, it binds directly to 16S rRNA central domain where it helps coordinate assembly of the platform of the 30S subunit. This chain is Small ribosomal subunit protein uS8, found in Nocardia farcinica (strain IFM 10152).